Here is a 763-residue protein sequence, read N- to C-terminus: MAGFDWFWKALGGKQGRNQKRSLAIVDQAEAHTRDLEALDDAHLAARARTLVGDGTPQDPAELLAVLGIAAHRTLGMRPFPVQSQAVLRLIEGDVVHMATGEGKTLVGAMAATGLGLQGKTVHSITINDYLAVRDAEWMRPLVEFFGLSVGAISETMTPEQRREAYRCDVVYGSVSEIGFDVLRDQLITRRADAVQRRADVAIIDEADSVLVDEALVPLVLAGNQPGHAPRGKITEVVRRLKENDHYTVSEDRRNVFLTDKGAAALEQALGITSLYDDEHVGTTLVQVNLALHAQALLIRDIHYIVRDGKVQLIDASRGRVADLQRWPDGLQAAVEAKEGLAVTEGGRILDTITLQALVGRYPMVCGMTGTAVEATDQLRTFYNLHVSVIERNNPLRRFDEADRIYATMAEKNRAIIEEIAHLHHTGQPVLVGTHDVAESEELADALRDLDIEVSVLNAKNDAEEARIIAEAGDIGRVTVSTQMAGRGTDVRLGGPDESHYDQVVELGGLAVIGTARHRTARLDNQLRGRAGRQGDPGLSLFFVSLEDDVVVTGGAGESVTAQPDATGLIDSNRVRDWVAHCQRVTEGQLLEIHSQTWKYNKLLADQRVIIDERRARLLDTDLAWRELSERAQDRAAGLEGVDREVLEQAARDIMLYHLDLNWSEHLALMDDVRESIHLRAIARETPLDEYHRIAVREFKTLAQQAVDDAVETFRTVVIDDRGAHLEDAGLARPSATWTYMVSDNPLAGSGNSVISGIGNIFR.

ATP contacts are provided by residues glutamine 83, 101–105 (GEGKT), and aspartate 490.

It belongs to the SecA family. As to quaternary structure, monomer and homodimer. Part of the essential Sec protein translocation apparatus which comprises SecA, SecYEG and auxiliary proteins SecDF. Other proteins may also be involved.

Its subcellular location is the cell membrane. It localises to the cytoplasm. The enzyme catalyses ATP + H2O + cellular proteinSide 1 = ADP + phosphate + cellular proteinSide 2.. Functionally, part of the Sec protein translocase complex. Interacts with the SecYEG preprotein conducting channel. Has a central role in coupling the hydrolysis of ATP to the transfer of proteins into and across the cell membrane, serving as an ATP-driven molecular motor driving the stepwise translocation of polypeptide chains across the membrane. This is Protein translocase subunit SecA 2 from Corynebacterium efficiens (strain DSM 44549 / YS-314 / AJ 12310 / JCM 11189 / NBRC 100395).